Reading from the N-terminus, the 453-residue chain is Na(+)/H(+) antiporter NhaA (453 aa).

A run of 11 helical transmembrane segments spans residues 27 to 47 (FLHI…SALI), 78 to 98 (LHFW…GMEI), 114 to 134 (ILPI…YFIF), 143 to 163 (GWAV…ALLG), 172 to 192 (IILL…IAFF), 201 to 221 (GLLI…IGLA), 222 to 242 (SAWL…VTGV), 316 to 336 (PWVA…VSFA), 346 to 366 (FLIV…GIIT), 385 to 405 (WAGI…SIFV), and 421 to 441 (IGVL…GFIY).

Belongs to the NhaA Na(+)/H(+) (TC 2.A.33) antiporter family.

It localises to the cell inner membrane. It carries out the reaction Na(+)(in) + 2 H(+)(out) = Na(+)(out) + 2 H(+)(in). Functionally, na(+)/H(+) antiporter that extrudes sodium in exchange for external protons. This chain is Na(+)/H(+) antiporter NhaA, found in Bartonella tribocorum (strain CIP 105476 / IBS 506).